Consider the following 169-residue polypeptide: NAD(P)H-quinone oxidoreductase subunit J, chloroplastic (169 aa).

This sequence belongs to the complex I 30 kDa subunit family. NDH is composed of at least 16 different subunits, 5 of which are encoded in the nucleus.

It is found in the plastid. It localises to the chloroplast thylakoid membrane. The catalysed reaction is a plastoquinone + NADH + (n+1) H(+)(in) = a plastoquinol + NAD(+) + n H(+)(out). It carries out the reaction a plastoquinone + NADPH + (n+1) H(+)(in) = a plastoquinol + NADP(+) + n H(+)(out). In terms of biological role, NDH shuttles electrons from NAD(P)H:plastoquinone, via FMN and iron-sulfur (Fe-S) centers, to quinones in the photosynthetic chain and possibly in a chloroplast respiratory chain. The immediate electron acceptor for the enzyme in this species is believed to be plastoquinone. Couples the redox reaction to proton translocation, and thus conserves the redox energy in a proton gradient. The sequence is that of NAD(P)H-quinone oxidoreductase subunit J, chloroplastic from Anthoceros angustus (Hornwort).